The sequence spans 178 residues: MFDIGWSELLVIGVVALIAIGPKELPGVLRMVGQWMGKARRMASEFQGQFQEAMREAEMADLKKSFDEVKEAASGFSPAGMMSSLQRDVDKALDIEGVDKPAEPVIATSPEPVASVETPVTPTTPEPPHAETFVEAEAHQAVGEPLAIVREIKPEPQPQPADGAAPAEPERLKDAKAS.

A helical transmembrane segment spans residues 1 to 21 (MFDIGWSELLVIGVVALIAIG). The segment at 146-178 (LAIVREIKPEPQPQPADGAAPAEPERLKDAKAS) is disordered. The segment covering 168–178 (EPERLKDAKAS) has biased composition (basic and acidic residues).

The protein belongs to the TatB family. In terms of assembly, the Tat system comprises two distinct complexes: a TatABC complex, containing multiple copies of TatA, TatB and TatC subunits, and a separate TatA complex, containing only TatA subunits. Substrates initially bind to the TatABC complex, which probably triggers association of the separate TatA complex to form the active translocon.

Its subcellular location is the cell inner membrane. Functionally, part of the twin-arginine translocation (Tat) system that transports large folded proteins containing a characteristic twin-arginine motif in their signal peptide across membranes. Together with TatC, TatB is part of a receptor directly interacting with Tat signal peptides. TatB may form an oligomeric binding site that transiently accommodates folded Tat precursor proteins before their translocation. This chain is Sec-independent protein translocase protein TatB, found in Bradyrhizobium sp. (strain ORS 278).